The sequence spans 304 residues: Nod factor export ATP-binding protein I (304 aa).

The ABC transporter domain occupies 6–236 (IDFQQVEKRY…EIGCDVIEIY (231 aa)). 38–45 (GPNGAGKT) provides a ligand contact to ATP.

Belongs to the ABC transporter superfamily. Lipooligosaccharide exporter (TC 3.A.1.102) family. The complex is composed of two ATP-binding proteins (NodI) and two transmembrane proteins (NodJ).

It is found in the cell inner membrane. Part of the ABC transporter complex NodIJ involved in the export of the nodulation factors (Nod factors), the bacterial signal molecules that induce symbiosis and subsequent nodulation induction. Nod factors are LCO (lipo-chitin oligosaccharide), a modified beta-1,4-linked N-acetylglucosamine oligosaccharide. This subunit is responsible for energy coupling to the transport system. The polypeptide is Nod factor export ATP-binding protein I (Burkholderia pseudomallei (strain 1710b)).